We begin with the raw amino-acid sequence, 309 residues long: Malate dehydrogenase (309 aa).

NAD(+) is bound by residues 9-14 and Asp33; that span reads GAGFVG. Residues Arg82 and Arg88 each coordinate substrate. Residues Asn95 and 118–120 each bind NAD(+); that span reads VNN. 2 residues coordinate substrate: Asn120 and Arg151. Residue His175 is the Proton acceptor of the active site.

The protein belongs to the LDH/MDH superfamily. MDH type 3 family.

The catalysed reaction is (S)-malate + NAD(+) = oxaloacetate + NADH + H(+). Catalyzes the reversible oxidation of malate to oxaloacetate. The protein is Malate dehydrogenase of Chloroflexus aurantiacus (strain ATCC 29364 / DSM 637 / Y-400-fl).